The sequence spans 356 residues: 1-acyl-sn-glycerol-3-phosphate acyltransferase LPAT1, chloroplastic (356 aa).

The transit peptide at 1 to 56 directs the protein to the chloroplast; that stretch reads MDVASARSISSHPSYYGKPICSSQSSLIRISRDKVCCFGRISNGMTSFTTSLHAVP. Residues 127–147 traverse the membrane as a helical segment; sequence GIFFCVVAGISATFLIVLMII. The HXXXXD motif signature appears at 202-207; sequence HQSFLD. A helical membrane pass occupies residues 224 to 244; the sequence is TGIFVIPIIGWAMSMMGVVPL.

Belongs to the 1-acyl-sn-glycerol-3-phosphate acyltransferase family. As to expression, widely expressed. Expressed at higher level in leaves. Expressed at lower level in silique walls compared to leaves.

Its subcellular location is the plastid. It is found in the chloroplast membrane. It carries out the reaction a fatty acyl-[ACP] + a 1-acyl-sn-glycero-3-phosphate = a 1,2-diacyl-sn-glycero-3-phosphate + holo-[ACP]. It catalyses the reaction a 1-acyl-sn-glycero-3-phosphate + an acyl-CoA = a 1,2-diacyl-sn-glycero-3-phosphate + CoA. Its pathway is phospholipid metabolism; CDP-diacylglycerol biosynthesis; CDP-diacylglycerol from sn-glycerol 3-phosphate: step 2/3. Its function is as follows. Plastidial enzyme of the prokaryotic glycerol-3-phosphate pathway that converts lysophosphatidic acid (LPA) into phosphatidic acid by incorporating an acyl moiety at position sn-2. Utilizes palmitoyl-ACP (16:0-ACP) to produce phosphatidic acid containing a saturated group at position sn-2, which is characteristic of lipids synthesized by the prokaryotic pathway. In vitro, can use 16:0-CoA as acyl donor. Essential for embryo development during the transition from the globular to the heart stage when chloroplasts begin to form. The polypeptide is 1-acyl-sn-glycerol-3-phosphate acyltransferase LPAT1, chloroplastic (Arabidopsis thaliana (Mouse-ear cress)).